The following is a 327-amino-acid chain: Cytochrome f (327 aa).

A signal peptide spans methionine 1 to alanine 24. Heme-binding residues include tyrosine 25, cysteine 45, cysteine 48, and histidine 49. The chain crosses the membrane as a helical span at residues valine 293–lysine 313.

It belongs to the cytochrome f family. In terms of assembly, the 4 large subunits of the cytochrome b6-f complex are cytochrome b6, subunit IV (17 kDa polypeptide, PetD), cytochrome f and the Rieske protein, while the 4 small subunits are PetG, PetL, PetM and PetN. The complex functions as a dimer. Requires heme as cofactor.

It is found in the cellular thylakoid membrane. Component of the cytochrome b6-f complex, which mediates electron transfer between photosystem II (PSII) and photosystem I (PSI), cyclic electron flow around PSI, and state transitions. The protein is Cytochrome f of Synechococcus sp. (strain JA-2-3B'a(2-13)) (Cyanobacteria bacterium Yellowstone B-Prime).